The chain runs to 271 residues: Mannosyl-3-phosphoglycerate phosphatase (271 aa).

The active-site Nucleophile is aspartate 13. Positions 13, 15, and 214 each coordinate Mg(2+).

This sequence belongs to the HAD-like hydrolase superfamily. MPGP family. Mg(2+) serves as cofactor.

The protein localises to the cytoplasm. It carries out the reaction 2-O-(alpha-D-mannosyl)-3-phosphoglycerate + H2O = (2R)-2-O-(alpha-D-mannosyl)-glycerate + phosphate. The polypeptide is Mannosyl-3-phosphoglycerate phosphatase (Escherichia coli (strain 55989 / EAEC)).